We begin with the raw amino-acid sequence, 137 residues long: uncharacterized protein (137 aa).

Positions tyrosine 4 to aspartate 118 constitute a CENP-V/GFA domain. Residues cysteine 8, cysteine 10, cysteine 27, cysteine 29, cysteine 32, cysteine 71, and cysteine 74 each coordinate Zn(2+).

Belongs to the Gfa family. Zn(2+) is required as a cofactor.

The protein localises to the cytoplasm. Its subcellular location is the nucleus. This is an uncharacterized protein from Schizosaccharomyces pombe (strain 972 / ATCC 24843) (Fission yeast).